We begin with the raw amino-acid sequence, 329 residues long: Biotin synthase (329 aa).

Positions 38-262 constitute a Radical SAM core domain; sequence NTIQVSTLLS…IMPHSYIRLS (225 aa). Cys-53, Cys-57, and Cys-60 together coordinate [4Fe-4S] cluster. [2Fe-2S] cluster-binding residues include Cys-97, Cys-128, Cys-188, and Arg-260.

Belongs to the radical SAM superfamily. Biotin synthase family. In terms of assembly, homodimer. The cofactor is [4Fe-4S] cluster. Requires [2Fe-2S] cluster as cofactor.

The enzyme catalyses (4R,5S)-dethiobiotin + (sulfur carrier)-SH + 2 reduced [2Fe-2S]-[ferredoxin] + 2 S-adenosyl-L-methionine = (sulfur carrier)-H + biotin + 2 5'-deoxyadenosine + 2 L-methionine + 2 oxidized [2Fe-2S]-[ferredoxin]. Its pathway is cofactor biosynthesis; biotin biosynthesis; biotin from 7,8-diaminononanoate: step 2/2. Catalyzes the conversion of dethiobiotin (DTB) to biotin by the insertion of a sulfur atom into dethiobiotin via a radical-based mechanism. The protein is Biotin synthase of Acinetobacter baumannii (strain ACICU).